Consider the following 426-residue polypeptide: Trigger factor (426 aa).

Positions 165-239 constitute a PPIase FKBP-type domain; the sequence is GDVYKLNEAG…ISEIKRLELP (75 aa).

This sequence belongs to the FKBP-type PPIase family. Tig subfamily.

Its subcellular location is the cytoplasm. The enzyme catalyses [protein]-peptidylproline (omega=180) = [protein]-peptidylproline (omega=0). Involved in protein export. Acts as a chaperone by maintaining the newly synthesized protein in an open conformation. Functions as a peptidyl-prolyl cis-trans isomerase. This is Trigger factor from Pelodictyon phaeoclathratiforme (strain DSM 5477 / BU-1).